Consider the following 433-residue polypeptide: Glutamate-1-semialdehyde 2,1-aminomutase (433 aa).

Residue K273 is modified to N6-(pyridoxal phosphate)lysine.

Belongs to the class-III pyridoxal-phosphate-dependent aminotransferase family. HemL subfamily. Homodimer. Pyridoxal 5'-phosphate serves as cofactor.

The protein resides in the cytoplasm. The enzyme catalyses (S)-4-amino-5-oxopentanoate = 5-aminolevulinate. The protein operates within porphyrin-containing compound metabolism; protoporphyrin-IX biosynthesis; 5-aminolevulinate from L-glutamyl-tRNA(Glu): step 2/2. It participates in porphyrin-containing compound metabolism; chlorophyll biosynthesis. In Rippkaea orientalis (strain PCC 8801 / RF-1) (Cyanothece sp. (strain PCC 8801)), this protein is Glutamate-1-semialdehyde 2,1-aminomutase.